We begin with the raw amino-acid sequence, 798 residues long: Penicillin-binding protein 1A (798 aa).

At 2 to 9 (IKKILTTC) the chain is on the cytoplasmic side. The chain crosses the membrane as a helical; Signal-anchor for type II membrane protein span at residues 10 to 30 (FGLFFGFCVFGVGLVAIAILV). At 31–798 (TYPKLPSLDS…SKQQQLDSLF (768 aa)) the chain is on the periplasmic side. Residues 50 to 218 (LTIYSADGEV…SAYNPIVNPE (169 aa)) are transglycosylase. E88 acts as the Proton donor; for transglycosylase activity in catalysis. Residues 378–700 (RRALGFAARA…GTIAVPVWVD (323 aa)) are transpeptidase. S461 serves as the catalytic Acyl-ester intermediate; for transpeptidase activity. The segment at 739–798 (LMLDNSGIAPQPSRRAKEDDEAAVENEQQGRSDETRQDVQETPVLPSNTDSKQQQLDSLF) is disordered. Residues 766-777 (QQGRSDETRQDV) are compositionally biased toward basic and acidic residues. Residues 783–798 (LPSNTDSKQQQLDSLF) are compositionally biased toward polar residues.

This sequence in the N-terminal section; belongs to the glycosyltransferase 51 family. In the C-terminal section; belongs to the transpeptidase family.

The protein resides in the cell inner membrane. The enzyme catalyses [GlcNAc-(1-&gt;4)-Mur2Ac(oyl-L-Ala-gamma-D-Glu-L-Lys-D-Ala-D-Ala)](n)-di-trans,octa-cis-undecaprenyl diphosphate + beta-D-GlcNAc-(1-&gt;4)-Mur2Ac(oyl-L-Ala-gamma-D-Glu-L-Lys-D-Ala-D-Ala)-di-trans,octa-cis-undecaprenyl diphosphate = [GlcNAc-(1-&gt;4)-Mur2Ac(oyl-L-Ala-gamma-D-Glu-L-Lys-D-Ala-D-Ala)](n+1)-di-trans,octa-cis-undecaprenyl diphosphate + di-trans,octa-cis-undecaprenyl diphosphate + H(+). It catalyses the reaction Preferential cleavage: (Ac)2-L-Lys-D-Ala-|-D-Ala. Also transpeptidation of peptidyl-alanyl moieties that are N-acyl substituents of D-alanine.. The protein operates within cell wall biogenesis; peptidoglycan biosynthesis. In terms of biological role, cell wall formation. Synthesis of cross-linked peptidoglycan from the lipid intermediates. The enzyme has a penicillin-insensitive transglycosylase N-terminal domain (formation of linear glycan strands) and a penicillin-sensitive transpeptidase C-terminal domain (cross-linking of the peptide subunits). Essential for cell wall synthesis. This chain is Penicillin-binding protein 1A (mrcA), found in Neisseria gonorrhoeae (strain ATCC 700825 / FA 1090).